A 224-amino-acid polypeptide reads, in one-letter code: Claudin-17 (224 aa).

Residues 1 to 7 (MAFYPLQ) lie on the Cytoplasmic side of the membrane. A helical transmembrane segment spans residues 8 to 28 (IAGLVLGFFGLVGTIGTTLLP). At 29–81 (QWRVSAFIGSNIIIFERIWEGLWMNCIQQAMVTLQCKFYNSILALPPVLEAAR) the chain is on the extracellular side. The helical transmembrane segment at 82 to 102 (ALMCVAVALALVALIIGICGM) threads the bilayer. Residues 103-124 (KQLQCTGSSERVKAYLLGTSGV) lie on the Cytoplasmic side of the membrane. Residues 125-145 (LFILTGIFVLIPVSWTANIII) form a helical membrane-spanning segment. At 146–164 (RDFYDPTVHAGQKRELGGA) the chain is on the extracellular side. A helical transmembrane segment spans residues 165-185 (LFLGWATAAVLFIGGGLLCGY). Over 186–224 (CCCNRKERWHRYPVPAYRVPQKDNQRNVTVPRKSSTSYV) the chain is Cytoplasmic.

The protein belongs to the claudin family. In terms of assembly, does not form homotypic polymeric strands and it is not sufficient to form tight junctions by its own. Interacts with OCLN. In terms of tissue distribution, expressed at high levels in the kidney and at mucher lower levels in the brain. In the kidney, expression gradually decreases from the proximal tubule downstream to the distal convoluted tubule. Expressed in the thin ascending limb of Henle's loop, as well as in the thick ascending limb of Henle's loop. In the distal convoluted tubules, expressed only in a few tubules. Not detected in the collecting duct. In the brain, expressed in blood vessels (at protein level).

The protein resides in the cell junction. It is found in the tight junction. It localises to the cell membrane. The catalysed reaction is chloride(in) = chloride(out). The enzyme catalyses hydrogencarbonate(in) = hydrogencarbonate(out). It catalyses the reaction bromide(in) = bromide(out). It carries out the reaction iodide(out) = iodide(in). The catalysed reaction is fluoride(in) = fluoride(out). The enzyme catalyses nitrate(in) = nitrate(out). It catalyses the reaction thiocyanate(in) = thiocyanate(out). Functionally, channel-forming tight junction protein with selectivity for anions, including chloride and hydrogencarbonate, and for solutes smaller than 9 Angstrom in diameter. In the kidney proximal tubule, may be involved in quantitative reabsorption of filtered anions. Does not affect water permeability. The sequence is that of Claudin-17 (Cldn17) from Mus musculus (Mouse).